Consider the following 255-residue polypeptide: uncharacterized protein (255 aa).

The protein belongs to the methyltransferase superfamily.

This is an uncharacterized protein from Mycolicibacterium vanbaalenii (strain DSM 7251 / JCM 13017 / BCRC 16820 / KCTC 9966 / NRRL B-24157 / PYR-1) (Mycobacterium vanbaalenii).